We begin with the raw amino-acid sequence, 460 residues long: Mitochondrial distribution and morphology protein 10 (460 aa).

The protein belongs to the MDM10 family. In terms of assembly, component of the ER-mitochondria encounter structure (ERMES) or MDM complex, composed of MMM1, MDM10, MDM12 and MDM34. Associates with the mitochondrial outer membrane sorting assembly machinery SAM(core) complex.

The protein localises to the mitochondrion outer membrane. Its function is as follows. Component of the ERMES/MDM complex, which serves as a molecular tether to connect the endoplasmic reticulum and mitochondria. Components of this complex are involved in the control of mitochondrial shape and protein biogenesis and may function in phospholipid exchange. MDM10 is involved in the late assembly steps of the general translocase of the mitochondrial outer membrane (TOM complex). Functions in the TOM40-specific route of the assembly of outer membrane beta-barrel proteins, including the association of TOM40 with the receptor TOM22 and small TOM proteins. Can associate with the SAM(core) complex as well as the MDM12-MMM1 complex, both involved in late steps of the major beta-barrel assembly pathway, that is responsible for biogenesis of all outer membrane beta-barrel proteins. May act as a switch that shuttles between both complexes and channels precursor proteins into the TOM40-specific pathway. Plays a role in mitochondrial morphology and in the inheritance of mitochondria. This Candida glabrata (strain ATCC 2001 / BCRC 20586 / JCM 3761 / NBRC 0622 / NRRL Y-65 / CBS 138) (Yeast) protein is Mitochondrial distribution and morphology protein 10.